A 107-amino-acid polypeptide reads, in one-letter code: Nitrogenase-stabilizing/protective protein NifW (107 aa).

Belongs to the NifW family. As to quaternary structure, homotrimer; associates with NifD.

Functionally, may protect the nitrogenase Fe-Mo protein from oxidative damage. The chain is Nitrogenase-stabilizing/protective protein NifW from Gloeothece citriformis (strain PCC 7424) (Cyanothece sp. (strain PCC 7424)).